Consider the following 389-residue polypeptide: 5-hydroxytryptamine receptor 1B (389 aa).

A disordered region spans residues 1–27 (MEDAGTPCAPPPPAGSQTGAPPANLSS). At 1–45 (MEDAGTPCAPPPPAGSQTGAPPANLSSAPHNCSAEGYIYQDSIAL) the chain is on the extracellular side. Polar residues predominate over residues 15–27 (GSQTGAPPANLSS). N-linked (GlcNAc...) asparagine glycosylation is found at Asn24 and Asn31. A helical membrane pass occupies residues 46 to 71 (PWKVLLAILLALLTLATTLSNAFVIA). Over 72 to 85 (TVYRTRKLHTPANY) the chain is Cytoplasmic. A helical membrane pass occupies residues 86–110 (LIASLAVTDLLVSILVMPISTMYAV). Residues 111–118 (TGRWTLGQ) lie on the Extracellular side of the membrane. Residues 119-144 (VVCDLWLSSDITCCTASILHLCVIAL) form a helical membrane-spanning segment. Cys121 and Cys198 are disulfide-bonded. The ergotamine site is built by Asp128 and Thr133. The DRY motif; important for ligand-induced conformation changes and signaling signature appears at 145–147 (DRY). At 145–164 (DRYWAITDAVEYSAKRTPKR) the chain is on the cytoplasmic side. The helical transmembrane segment at 165-183 (AAVMIALVWVFSISISLPP) threads the bilayer. Over 184–204 (FFWRQAKAEEEVSDCVVNTDH) the chain is Extracellular. Residue Val200 coordinates ergotamine. A helical transmembrane segment spans residues 205 to 228 (ILYTVYSTVGAFYFPTLLLIALYG). Over 229–314 (RIYVEARSRI…AARERKATKT (86 aa)) the chain is Cytoplasmic. Polar residues predominate over residues 258–271 (DSPGSTSSVTSVNS). The disordered stretch occupies residues 258–281 (DSPGSTSSVTSVNSRAPDVPSESG). The chain crosses the membrane as a helical span at residues 315–336 (LGIILGAFIVCWLPFFIISLVM). At 337–346 (PICKDACWFH) the chain is on the extracellular side. A helical membrane pass occupies residues 347–369 (LAIFDFFTWLGYLNSLINPIIYT). The short motif at 364-368 (NPIIY) is the NPxxY motif; important for ligand-induced conformation changes and signaling element. At 370–389 (MSNEDFKQAFHKLIRFKCAS) the chain is on the cytoplasmic side. Cys387 carries the S-palmitoyl cysteine lipid modification.

Belongs to the G-protein coupled receptor 1 family. As to quaternary structure, homodimer. Heterodimer with HTR1D. Phosphorylated. Desensitization of the receptor may be mediated by its phosphorylation. Post-translationally, palmitoylated.

Its subcellular location is the cell membrane. Functionally, G-protein coupled receptor for 5-hydroxytryptamine (serotonin). Also functions as a receptor for ergot alkaloid derivatives, various anxiolytic and antidepressant drugs and other psychoactive substances, such as lysergic acid diethylamide (LSD). Ligand binding causes a conformation change that triggers signaling via guanine nucleotide-binding proteins (G proteins) and modulates the activity of downstream effectors, such as adenylate cyclase. HTR1B is coupled to G(i)/G(o) G alpha proteins and mediates inhibitory neurotransmission by inhibiting adenylate cyclase activity. Arrestin family members inhibit signaling via G proteins and mediate activation of alternative signaling pathways. Regulates the release of 5-hydroxytryptamine, dopamine and acetylcholine in the brain, and thereby affects neural activity, nociceptive processing, pain perception, mood and behavior. Besides, plays a role in vasoconstriction of cerebral arteries. This is 5-hydroxytryptamine receptor 1B (HTR1B) from Vulpes vulpes (Red fox).